A 121-amino-acid chain; its full sequence is Large ribosomal subunit protein bL12 (121 aa).

Belongs to the bacterial ribosomal protein bL12 family. In terms of assembly, homodimer. Part of the ribosomal stalk of the 50S ribosomal subunit. Forms a multimeric L10(L12)X complex, where L10 forms an elongated spine to which 2 to 4 L12 dimers bind in a sequential fashion. Binds GTP-bound translation factors.

Forms part of the ribosomal stalk which helps the ribosome interact with GTP-bound translation factors. Is thus essential for accurate translation. This is Large ribosomal subunit protein bL12 from Limosilactobacillus reuteri (strain DSM 20016) (Lactobacillus reuteri).